Here is a 493-residue protein sequence, read N- to C-terminus: Ecdysteroid UDP-glucosyltransferase (493 aa).

An N-terminal signal peptide occupies residues 1-17 (MIFILLTTLLAVGGAQT).

This sequence belongs to the UDP-glycosyltransferase family.

Its function is as follows. Catalyzes the transfer of glucose from UDP-glucose to ecdysteroids which are insect molting hormones. Expression of egt interferes with normal insect development and block molting. In Choristoneura fumiferana defective polyhedrosis virus (Cfdef), this protein is Ecdysteroid UDP-glucosyltransferase (egt).